The following is a 434-amino-acid chain: CBL-interacting protein kinase 15 (434 aa).

The Protein kinase domain occupies 12-267 (YELGRLLGKG…IQKIKESTWF (256 aa)). ATP is bound by residues 18–26 (LGKGTFGKV) and Lys41. The active-site Proton acceptor is Asp135. The activation loop stretch occupies residues 153–182 (DFGLSALSESKRQDGLLHTTCGTPAYVAPE). One can recognise an NAF domain in the interval 298–333 (RKKNAHEDVKPMSVTNLNAFEIISFSKGFDLSGMFI). Residues 338-367 (RNEARFTSDKSASTIISKLEDVAKALNLRV) are PPI.

The protein belongs to the protein kinase superfamily. CAMK Ser/Thr protein kinase family. SNF1 subfamily. It depends on Mn(2+) as a cofactor.

It carries out the reaction L-seryl-[protein] + ATP = O-phospho-L-seryl-[protein] + ADP + H(+). It catalyses the reaction L-threonyl-[protein] + ATP = O-phospho-L-threonyl-[protein] + ADP + H(+). Involved in salt stress tolerance. CIPK serine-threonine protein kinases interact with CBL proteins. Binding of a CBL protein to the regulatory NAF domain of CIPK protein lead to the activation of the kinase in a calcium-dependent manner. The protein is CBL-interacting protein kinase 15 (CIPK15) of Oryza sativa subsp. japonica (Rice).